The sequence spans 400 residues: MERNISVEELNQIPTPKKEVEIVERKGIGHPDSVADGIAEAVSRSLSKYYLEHYGRILHHNTDQVEVVGGQSAPKYGGGLVLEPTYILLSGRATTKVGNDRVPYKSITIKAAKDYLRNNFSHLDVDADVMIDSRIGQGSVDLVEVYDTSKLEANDTSFGVGFAPLSETENIVLKTERYLNGSLKKKLPMVGYDIKVMGFRQKDTINLTVAAAFVDKYIKDADEYFNLKDQLKDLVLDNAVEETDKEVKVYINTADIRENSKSVGYLTVTGMSMENGDDGSVGRGNRVNGLITPYRAMSMEAAAGKNPVTHVGKLYNVLANKIANDIVQEEGNDIAEVLVRIVSQIGRPIDDPHVASVQVIYEGNVDHSKHKNNIRNLVNDRLAHVSDLTMQFVEGKITVF.

Residue 136 to 141 (GQGSVD) participates in ATP binding.

This sequence belongs to the AdoMet synthase 2 family. Mg(2+) is required as a cofactor.

It catalyses the reaction L-methionine + ATP + H2O = S-adenosyl-L-methionine + phosphate + diphosphate. It participates in amino-acid biosynthesis; S-adenosyl-L-methionine biosynthesis; S-adenosyl-L-methionine from L-methionine: step 1/1. Its function is as follows. Catalyzes the formation of S-adenosylmethionine from methionine and ATP. The sequence is that of S-adenosylmethionine synthase from Thermoplasma volcanium (strain ATCC 51530 / DSM 4299 / JCM 9571 / NBRC 15438 / GSS1).